The chain runs to 245 residues: Tetraspanin-16 (245 aa).

Over 1–13 the chain is Cytoplasmic; the sequence is MAEIHTPYSSLKK. A helical membrane pass occupies residues 14–34; the sequence is LLSLLNGFVAVSGIILVGLGI. The Extracellular portion of the chain corresponds to 35–37; it reads GGK. Residues 38–58 traverse the membrane as a helical segment; sequence CGGASLTNVLGLSSAYLLHVG. Residue asparagine 59 is a topological domain, cytoplasmic. Residues 60–80 form a helical membrane-spanning segment; the sequence is LCLVMGCITVLLGCAGWYGAT. At 81–94 the chain is on the extracellular side; sequence KESRGTLLFCILSM. A helical membrane pass occupies residues 95–115; the sequence is VIVLIMEVTAATVVLLFFPIV. The Cytoplasmic portion of the chain corresponds to 116 to 245; sequence GDVALEHTFV…VAQAGLELLA (130 aa).

Belongs to the tetraspanin (TM4SF) family. Broadly expressed in most human tissues and cell lines including neural and bone marrow derived tissues.

The protein localises to the membrane. The sequence is that of Tetraspanin-16 (TSPAN16) from Homo sapiens (Human).